We begin with the raw amino-acid sequence, 424 residues long: MSVKWEKQEGNEGVLTVEVDAETFKTALDDAFKKVVKQVSIPGFRKGKIPRGLFEQRFGVEALYQDALDILLPVEYPKAVEEAGIEPVDRPEIDVEKIEKGESLIFTAKVTVKPEVKLGEYKGLGIEKDDTTVTDEDVQNELKALQERQAELVVKEEGAVEEGNTVVLDFEGFVDGEAFEGGKAENYSLEVGSGSFIPGFEDQLVGLEAGAEKDVEVTFPEEYHAEDLAGKPAVFKVKIHEIKAKELPELDDEFAKDIDEEVETLAELTEKTKKRLEEAKENEADAKLREELVLKASENAEIDVPQAMVDTELDRMLKEFEQRLQMQGMNLELYTQFSGQDEAALKEQMKEDAEKRVKSNLTLEAIAKAENLEVSDEEVDAELTKMAEAYNMPVENIKQAIGSTDAMKEDLKVRKAIDFLVENR.

One can recognise a PPIase FKBP-type domain in the interval 163 to 248 (GNTVVLDFEG…IHEIKAKELP (86 aa)).

It belongs to the FKBP-type PPIase family. Tig subfamily.

It is found in the cytoplasm. The catalysed reaction is [protein]-peptidylproline (omega=180) = [protein]-peptidylproline (omega=0). In terms of biological role, involved in protein export. Acts as a chaperone by maintaining the newly synthesized protein in an open conformation. Functions as a peptidyl-prolyl cis-trans isomerase. This is Trigger factor (tig) from Bacillus subtilis (strain 168).